Here is a 469-residue protein sequence, read N- to C-terminus: Phosphoglucosamine mutase (469 aa).

The Phosphoserine intermediate role is filled by S117. Residues S117, D263, D265, and D267 each contribute to the Mg(2+) site. A Phosphoserine modification is found at S117.

It belongs to the phosphohexose mutase family. Mg(2+) serves as cofactor. Post-translationally, activated by phosphorylation.

It catalyses the reaction alpha-D-glucosamine 1-phosphate = D-glucosamine 6-phosphate. Catalyzes the conversion of glucosamine-6-phosphate to glucosamine-1-phosphate. In Anaeromyxobacter sp. (strain Fw109-5), this protein is Phosphoglucosamine mutase.